Here is an 88-residue protein sequence, read N- to C-terminus: Eclosion hormone (88 aa).

The first 26 residues, 1–26 (MANKLTAVIVVALAVAFMVNLDYANC), serve as a signal peptide directing secretion. Cystine bridges form between Cys40–Cys64, Cys44–Cys60, and Cys47–Cys75.

This sequence belongs to the insect eclosion hormone family.

It localises to the secreted. Functionally, neuropeptide that triggers the performance of ecdysis behaviors at the end of a molt. It triggers adult behavior patterns: larval, pupal and adult ecdysis, and plasticization during the molt. The protein is Eclosion hormone of Bombyx mori (Silk moth).